Consider the following 503-residue polypeptide: Glucosaminyl-phosphatidylinositol-acyltransferase PIGW (503 aa).

At 1–21 (MSQKQMKEAFVSNQNGTSVLE) the chain is on the lumenal side. A glycan (N-linked (GlcNAc...) asparagine) is linked at Asn15. Residues 22 to 42 (ITEGLCLPALCILCRGLLIIL) traverse the membrane as a helical segment. Residues 43 to 56 (SQQLCSSLHNSRTR) lie on the Cytoplasmic side of the membrane. Residues 57–75 (FLVDFAFLIVPLVTTLTIF) traverse the membrane as a helical segment. Topologically, residues 76 to 78 (SSF) are lumenal. Residues 79-98 (VLLEYLVAIILGAGLLYEIY) traverse the membrane as a helical segment. The Cytoplasmic segment spans residues 99–131 (CRRTCYARMPFQKICEKFLKVSLESEHIPAISC). The chain crosses the membrane as a helical span at residues 132-152 (FRVVNSAFTAVAILAVDFPLF). Over 153–160 (PRRYAKTE) the chain is Lumenal. The chain crosses the membrane as a helical span at residues 161 to 181 (LYGTGAMDYGVGGFIFGSAMV). The Cytoplasmic segment spans residues 182 to 201 (SPEVRRKYTKGSRFCYLTKS). Residues 202–222 (LYSLWPLVFLGVGRLVAIKSV) form a helical membrane-spanning segment. Topologically, residues 223–236 (DYQEHLTEYGVHWN) are lumenal. Residues 237–257 (FFFTLIAVKLITSLLLLICPL) form a helical membrane-spanning segment. The Cytoplasmic segment spans residues 258–259 (NR). Residues 260 to 280 (SWVVAISIAALYQLALDFTPL) traverse the membrane as a helical segment. Residues 281-304 (KSLILYGTDGSGTRVGLLNANREG) lie on the Lumenal side of the membrane. The helical transmembrane segment at 305–325 (IISVLGYVAVHMAGVQTGLYV) threads the bilayer. The Cytoplasmic portion of the chain corresponds to 326-337 (LKKRSHIKDWIK). Residues 338 to 358 (VACCILLTAIGLFISLYIVQV) traverse the membrane as a helical segment. At 359–369 (NVEVASRRMAN) the chain is on the lumenal side. A helical membrane pass occupies residues 370-390 (LAFCIWIVASCLILLSSLLLG). Over 391 to 447 (DIILSFAKFVIKEAAVPCSWKLIQSPTANKKHLESIVFDAKRKEPTLCLITAMNRNQ) the chain is Cytoplasmic. Residue Ser415 is modified to Phosphoserine. A helical membrane pass occupies residues 448 to 468 (LLFFLLSNVTTGLVNLSIDTL). The Lumenal portion of the chain corresponds to 469-472 (HSST). A helical transmembrane segment spans residues 473 to 493 (PWALCLLNLYMFTNCLIIYVL). At 494–503 (HLQDKTIKFW) the chain is on the cytoplasmic side.

Belongs to the PIGW family.

The protein resides in the endoplasmic reticulum membrane. The protein operates within glycolipid biosynthesis; glycosylphosphatidylinositol-anchor biosynthesis. In terms of biological role, acyltransferase that catalyzes the acyl transfer from an acyl-CoA at the 2-OH position of the inositol ring of glucosaminyl phosphatidylinositol (GlcN-PI) to generate glucosaminyl acyl phosphatidylinositol (GlcN-(acyl)PI) and participates in the fourth step of GPI-anchor biosynthesis. Required for the transport of GPI-anchored proteins to the plasma membrane. Acetylation during GPI-anchor biosynthesis is not essential for the subsequent mannosylation and is usually removed soon after the attachment of GPIs to proteins. This chain is Glucosaminyl-phosphatidylinositol-acyltransferase PIGW, found in Bos taurus (Bovine).